Reading from the N-terminus, the 147-residue chain is UPF0306 protein YhbP (147 aa).

This sequence belongs to the UPF0306 family.

The chain is UPF0306 protein YhbP from Shigella boydii serotype 4 (strain Sb227).